The following is a 421-amino-acid chain: Protein MucB (421 aa).

The 186-residue stretch at 2–187 (FALIDVNGMY…LPVAEVWGVG (186 aa)) folds into the UmuC domain.

This sequence belongs to the DNA polymerase type-Y family.

Functionally, involved in UV protection and mutation. This is Protein MucB (mucB) from Salmonella typhimurium.